The sequence spans 45 residues: Large ribosomal subunit protein bL34 (45 aa).

A disordered region spans residues M1 to V45. Basic residues-rich tracts occupy residues R11 to S25 and R33 to V45.

Belongs to the bacterial ribosomal protein bL34 family.

The protein is Large ribosomal subunit protein bL34 of Picosynechococcus sp. (strain ATCC 27264 / PCC 7002 / PR-6) (Agmenellum quadruplicatum).